The sequence spans 157 residues: MHFTYWRMSEYFCTYEIFAANAIMCALMPCLAIFFIIELLCKNFNTMYNVMYVVLFAIFQLFEKGFDIAKTIADKWHIRKILLFVNNAYQHLTLYVEKYQSINYAIKIAAIYYNIYVLYYSVVFLHCLLFFNVHSKIIIKLFVVLGIDVALYSLIIK.

This is an uncharacterized protein from Lepidoptera (butterflies and moths).